The sequence spans 365 residues: UDP-N-acetylglucosamine--N-acetylmuramyl-(pentapeptide) pyrophosphoryl-undecaprenol N-acetylglucosamine transferase (365 aa).

UDP-N-acetyl-alpha-D-glucosamine is bound by residues 19-21 (TGG), Asn-131, Arg-170, Ser-201, Ile-255, 274-279 (ALTVTE), and Gln-300.

This sequence belongs to the glycosyltransferase 28 family. MurG subfamily.

It localises to the cell inner membrane. It catalyses the reaction di-trans,octa-cis-undecaprenyl diphospho-N-acetyl-alpha-D-muramoyl-L-alanyl-D-glutamyl-meso-2,6-diaminopimeloyl-D-alanyl-D-alanine + UDP-N-acetyl-alpha-D-glucosamine = di-trans,octa-cis-undecaprenyl diphospho-[N-acetyl-alpha-D-glucosaminyl-(1-&gt;4)]-N-acetyl-alpha-D-muramoyl-L-alanyl-D-glutamyl-meso-2,6-diaminopimeloyl-D-alanyl-D-alanine + UDP + H(+). It functions in the pathway cell wall biogenesis; peptidoglycan biosynthesis. Its function is as follows. Cell wall formation. Catalyzes the transfer of a GlcNAc subunit on undecaprenyl-pyrophosphoryl-MurNAc-pentapeptide (lipid intermediate I) to form undecaprenyl-pyrophosphoryl-MurNAc-(pentapeptide)GlcNAc (lipid intermediate II). The polypeptide is UDP-N-acetylglucosamine--N-acetylmuramyl-(pentapeptide) pyrophosphoryl-undecaprenol N-acetylglucosamine transferase (Acinetobacter baumannii (strain ACICU)).